A 1578-amino-acid chain; its full sequence is E3 ubiquitin-protein ligase HECW2 (1578 aa).

Serine 48 bears the Phosphoserine mark. A C2 domain is found at 171-298 (MEGGASGSLH…LERQAGDQML (128 aa)). 2 disordered regions span residues 341-453 (HTVN…FPTD) and 496-802 (IDDG…PSVR). Positions 386 to 406 (RTSSTLEIDTEDLISTSSRNS) are enriched in polar residues. Positions 518–532 (ASIHETASLEERLEN) are enriched in basic and acidic residues. Residues 559–576 (SADQGSTELCSSQEVDQP) are compositionally biased toward polar residues. Residues 577–593 (TSGADAGASDTSGGSRR) show a composition bias toward low complexity. Composition is skewed to polar residues over residues 597 to 614 (ETESLDQGSEPSQVSSET), 643 to 664 (SSCNESVTTQLSSVETRCSSLE), and 688 to 708 (PTSSGPAEGSQESVCTPSSLP). 3 stretches are compositionally biased toward low complexity: residues 721-735 (AAEAAALSEQGELGE), 746-755 (AAAAAPAAAA), and 769-782 (AQGACEGATAQEEG). The interval 737 to 1074 (WQRRGSLEGA…PRPSSTFNTV (338 aa)) is interaction with TP73. Positions 813-846 (EALPPNWEARIDSHGRIFYVDHVNRTTTWQRPTA) constitute a WW 1 domain. A coiled-coil region spans residues 853-880 (LQRSNSIQQMEQLNRRYQSIRRTMTNER). Phosphoserine occurs at positions 858 and 915. Positions 991 to 1024 (LELPRGWEMKHDHQGKAFFVDHNSRTTTFIDPRL) constitute a WW 2 domain. Disordered stretches follow at residues 1030 to 1075 (RPTS…NTVS) and 1167 to 1193 (CQSPRGSPVSSPQNSPGTQRANARAPA). Residues 1037-1046 (HRQHLTRQRS) are compositionally biased toward basic residues. Residues 1167–1187 (CQSPRGSPVSSPQNSPGTQRA) are compositionally biased toward polar residues. Phosphoserine is present on serine 1181. The HECT domain maps to 1243-1578 (SRKDLQRNKL…VEETSTFGLE (336 aa)). The active-site Glycyl thioester intermediate is the cysteine 1546.

As to quaternary structure, interacts with TP73. Interacts with FZR1.

It localises to the cytoplasm. Its subcellular location is the cytoskeleton. The protein resides in the spindle. The catalysed reaction is S-ubiquitinyl-[E2 ubiquitin-conjugating enzyme]-L-cysteine + [acceptor protein]-L-lysine = [E2 ubiquitin-conjugating enzyme]-L-cysteine + N(6)-ubiquitinyl-[acceptor protein]-L-lysine.. It functions in the pathway protein modification; protein ubiquitination. Functionally, E3 ubiquitin-protein ligase that mediates ubiquitination of TP73. Acts to stabilize TP73 and enhance activation of transcription by TP73. Involved in the regulation of mitotic metaphase/anaphase transition. This Mus musculus (Mouse) protein is E3 ubiquitin-protein ligase HECW2 (Hecw2).